We begin with the raw amino-acid sequence, 156 residues long: Small ribosomal subunit protein uS7 (156 aa).

Belongs to the universal ribosomal protein uS7 family. As to quaternary structure, part of the 30S ribosomal subunit. Contacts proteins S9 and S11.

Its function is as follows. One of the primary rRNA binding proteins, it binds directly to 16S rRNA where it nucleates assembly of the head domain of the 30S subunit. Is located at the subunit interface close to the decoding center, probably blocks exit of the E-site tRNA. This is Small ribosomal subunit protein uS7 (rpsG) from Geobacillus stearothermophilus (Bacillus stearothermophilus).